Reading from the N-terminus, the 103-residue chain is Large ribosomal subunit protein uL24 (103 aa).

It belongs to the universal ribosomal protein uL24 family. As to quaternary structure, part of the 50S ribosomal subunit.

Functionally, one of two assembly initiator proteins, it binds directly to the 5'-end of the 23S rRNA, where it nucleates assembly of the 50S subunit. One of the proteins that surrounds the polypeptide exit tunnel on the outside of the subunit. In Actinobacillus succinogenes (strain ATCC 55618 / DSM 22257 / CCUG 43843 / 130Z), this protein is Large ribosomal subunit protein uL24.